Consider the following 110-residue polypeptide: UPF0060 membrane protein Rpic_4131 (110 aa).

4 consecutive transmembrane segments (helical) span residues 8-28 (VLFA…WLVL), 33-53 (PFWL…LLTL), 65-85 (YGGV…GVAL), and 88-108 (WDVG…LQPQ).

Belongs to the UPF0060 family.

It localises to the cell inner membrane. The protein is UPF0060 membrane protein Rpic_4131 of Ralstonia pickettii (strain 12J).